The chain runs to 204 residues: Methylthioribulose-1-phosphate dehydratase (204 aa).

Residues histidine 94 and histidine 96 each contribute to the Zn(2+) site.

This sequence belongs to the aldolase class II family. MtnB subfamily. Requires Zn(2+) as cofactor.

The enzyme catalyses 5-(methylsulfanyl)-D-ribulose 1-phosphate = 5-methylsulfanyl-2,3-dioxopentyl phosphate + H2O. Its pathway is amino-acid biosynthesis; L-methionine biosynthesis via salvage pathway; L-methionine from S-methyl-5-thio-alpha-D-ribose 1-phosphate: step 2/6. In terms of biological role, catalyzes the dehydration of methylthioribulose-1-phosphate (MTRu-1-P) into 2,3-diketo-5-methylthiopentyl-1-phosphate (DK-MTP-1-P). The polypeptide is Methylthioribulose-1-phosphate dehydratase (Citrobacter koseri (strain ATCC BAA-895 / CDC 4225-83 / SGSC4696)).